The following is a 318-amino-acid chain: Taste receptor type 2 member 7 (318 aa).

Topologically, residues methionine 1–leucine 9 are extracellular. The chain crosses the membrane as a helical span at residues leucine 10 to valine 30. The Cytoplasmic portion of the chain corresponds to asparagine 31–arginine 55. Residues isoleucine 56–tyrosine 76 traverse the membrane as a helical segment. The Extracellular segment spans residues alanine 77–histidine 94. Residues leucine 95–phenylalanine 115 traverse the membrane as a helical segment. Residues histidine 116–arginine 128 are Cytoplasmic-facing. Residues valine 129–threonine 149 traverse the membrane as a helical segment. The Extracellular portion of the chain corresponds to glutamate 150–asparagine 187. Residues asparagine 167 and asparagine 175 are each glycosylated (N-linked (GlcNAc...) asparagine). A helical transmembrane segment spans residues leucine 188 to leucine 208. Over arginine 209–lysine 235 the chain is Cytoplasmic. Residues alanine 236–serine 256 form a helical membrane-spanning segment. Topologically, residues serine 257–alanine 266 are extracellular. Residues valine 267–leucine 287 form a helical membrane-spanning segment. Residues glycine 288–isoleucine 318 are Cytoplasmic-facing.

This sequence belongs to the G-protein coupled receptor T2R family.

Its subcellular location is the membrane. Its function is as follows. Gustducin-coupled receptor implicated in the perception of bitter compounds in the oral cavity and the gastrointestinal tract. Signals through PLCB2 and the calcium-regulated cation channel TRPM5. The chain is Taste receptor type 2 member 7 (TAS2R7) from Pongo pygmaeus (Bornean orangutan).